The primary structure comprises 142 residues: Large ribosomal subunit protein uL11 (142 aa).

Belongs to the universal ribosomal protein uL11 family. Part of the ribosomal stalk of the 50S ribosomal subunit. Interacts with L10 and the large rRNA to form the base of the stalk. L10 forms an elongated spine to which L12 dimers bind in a sequential fashion forming a multimeric L10(L12)X complex. One or more lysine residues are methylated.

In terms of biological role, forms part of the ribosomal stalk which helps the ribosome interact with GTP-bound translation factors. The chain is Large ribosomal subunit protein uL11 from Mesorhizobium japonicum (strain LMG 29417 / CECT 9101 / MAFF 303099) (Mesorhizobium loti (strain MAFF 303099)).